The sequence spans 1638 residues: Chromatin-remodeling ATPase INO80 (1638 aa).

The interval 41-93 (SLRKPLSSDEETDDEHVVKREHDVQDSDDSSTVGVVRMKQSSKRKSRLLASKE) is disordered. A phosphoserine mark is found at S47 and S48. T52 carries the post-translational modification Phosphothreonine. The span at 55–65 (EHVVKREHDVQ) shows a compositional bias: basic and acidic residues. A phosphoserine mark is found at S67 and S70. Residues 136–161 (VQQLLREHVREQRQRKNYYKKAANAQ) are a coiled coil. Positions 201–259 (RLAEAQAGPKPPKQRRRGRKKRDNMGSPESGEVPPSELGKYTFGDTLPNNEDDDEDGGE) are disordered. Over residues 212–222 (PKQRRRGRKKR) the composition is skewed to basic residues. 2 positions are modified to phosphoserine: S227 and S230. Acidic residues predominate over residues 250–259 (NEDDDEDGGE). One can recognise a DBINO domain in the interval 313–438 (IWQIMSKKES…AHFMSKKLGQ (126 aa)). Positions 499 to 528 (KEKEEEEQAQESVEDIKPEPRPEMKDLPQP) are disordered. Residues 502–511 (EEEEQAQESV) are compositionally biased toward acidic residues. Positions 512 to 526 (EDIKPEPRPEMKDLP) are enriched in basic and acidic residues. The 172-residue stretch at 547–718 (ANIYDQGISG…WALLHFIMPT (172 aa)) folds into the Helicase ATP-binding domain. 560–567 (DEMGLGKT) serves as a coordination point for ATP. Residues 1160–1315 (VLDNLLTRLK…GGNFKPDTLK (156 aa)) enclose the Helicase C-terminal domain. Disordered stretches follow at residues 1335 to 1364 (QEAKLQSSSPIPAATQSERKRRHPQKDVNM) and 1463 to 1638 (FLDD…VGPE). The span at 1338–1350 (KLQSSSPIPAATQ) shows a compositional bias: polar residues. Over residues 1473-1495 (MRRRHHPRGTRRGRPRGSTRRGG) the composition is skewed to basic residues. Low complexity-rich tracts occupy residues 1505-1534 (TPTQAATPAVPATASQAAAAGTGAAAGTSS) and 1618-1627 (SPATSRAPSP).

It belongs to the SNF2/RAD54 helicase family. As to quaternary structure, component of the chromatin remodeling Ino80 complex.

It localises to the nucleus. The enzyme catalyses ATP + H2O = ADP + phosphate + H(+). Its function is as follows. ATPase component of the chromatin remodeling INO80 complex which is involved in transcriptional regulation, DNA replication and DNA repair. Binds DNA. As part of the INO80 complex, remodels chromatin by shifting nucleosomes. The protein is Chromatin-remodeling ATPase INO80 of Drosophila melanogaster (Fruit fly).